Consider the following 182-residue polypeptide: Ribosome-recycling factor (182 aa).

This sequence belongs to the RRF family.

The protein resides in the cytoplasm. Responsible for the release of ribosomes from messenger RNA at the termination of protein biosynthesis. May increase the efficiency of translation by recycling ribosomes from one round of translation to another. This Synechocystis sp. (strain ATCC 27184 / PCC 6803 / Kazusa) protein is Ribosome-recycling factor.